A 424-amino-acid polypeptide reads, in one-letter code: FeMo cofactor biosynthesis protein NifB (424 aa).

The Radical SAM core domain occupies 12 to 261; sequence NDSSRHTYGR…PQMKHCARCR (250 aa). [4Fe-4S] cluster is bound by residues Cys-30, Cys-34, and Cys-37. S-adenosyl-L-methionine is bound by residues Gly-84, Thr-136, and Val-188. Positions 257 and 260 each coordinate [4Fe-4S] cluster.

It belongs to the radical SAM superfamily. NifB family. As to quaternary structure, monomer. [4Fe-4S] cluster is required as a cofactor.

Its pathway is cofactor biosynthesis; Fe-Mo cofactor biosynthesis. Functionally, involved in the biosynthesis of the iron-molybdenum cofactor (FeMo-co or M-cluster) found in the dinitrogenase enzyme of the nitrogenase complex in nitrogen-fixing microorganisms. NifB catalyzes the crucial step of radical SAM-dependent carbide insertion that occurs concomitant with the insertion of a 9th sulfur and the rearrangement/coupling of two [4Fe-4S] clusters into a [8Fe-9S-C] cluster, the precursor to the M-cluster. This is FeMo cofactor biosynthesis protein NifB from Chlorobaculum tepidum (strain ATCC 49652 / DSM 12025 / NBRC 103806 / TLS) (Chlorobium tepidum).